The primary structure comprises 767 residues: Photosystem I P700 chlorophyll a apoprotein A1 (767 aa).

A run of 8 helical transmembrane segments spans residues 72 to 95 (IFSA…FHGA), 158 to 181 (LMAL…FHYH), 197 to 221 (LNHH…HVSL), 305 to 323 (IAHH…GHMY), 364 to 387 (WHAQ…QHMY), 403 to 429 (IGLF…IAMV), 451 to 473 (AIIS…LYIH), and 548 to 566 (FMVH…LILL). Residues Cys-590 and Cys-599 each contribute to the [4Fe-4S] cluster site. Transmembrane regions (helical) follow at residues 606–627 (HVFL…HFSW) and 681–703 (TSAY…MFLF). His-692 lines the chlorophyll a' pocket. 2 residues coordinate chlorophyll a: Met-700 and Tyr-708. Residue Trp-709 coordinates phylloquinone. Residues 741-761 (AVGVAHYLLGGIATTWAFFHA) form a helical membrane-spanning segment.

Belongs to the PsaA/PsaB family. The PsaA/B heterodimer binds the P700 chlorophyll special pair and subsequent electron acceptors. PSI consists of a core antenna complex that captures photons, and an electron transfer chain that converts photonic excitation into a charge separation. The cyanobacterial PSI reaction center is composed of one copy each of PsaA,B,C,D,E,F,I,J,K,L,M and X, and forms trimeric complexes. PSI electron transfer chain: 5 chlorophyll a, 1 chlorophyll a', 2 phylloquinones and 3 4Fe-4S clusters. PSI core antenna: 90 chlorophyll a, 22 carotenoids, 3 phospholipids and 1 galactolipid. P700 is a chlorophyll a/chlorophyll a' dimer, A0 is one or more chlorophyll a, A1 is one or both phylloquinones and FX is a shared 4Fe-4S iron-sulfur center. is required as a cofactor.

The protein resides in the cellular thylakoid membrane. It catalyses the reaction reduced [plastocyanin] + hnu + oxidized [2Fe-2S]-[ferredoxin] = oxidized [plastocyanin] + reduced [2Fe-2S]-[ferredoxin]. PsaA and PsaB bind P700, the primary electron donor of photosystem I (PSI), as well as the electron acceptors A0, A1 and FX. PSI is a plastocyanin/cytochrome c6-ferredoxin oxidoreductase, converting photonic excitation into a charge separation, which transfers an electron from the donor P700 chlorophyll pair to the spectroscopically characterized acceptors A0, A1, FX, FA and FB in turn. Oxidized P700 is reduced on the lumenal side of the thylakoid membrane by plastocyanin or cytochrome c6. This is Photosystem I P700 chlorophyll a apoprotein A1 from Synechococcus sp. (strain CC9902).